We begin with the raw amino-acid sequence, 414 residues long: Tryptophan synthase beta chain (414 aa).

The residue at position 108 (K108) is an N6-(pyridoxal phosphate)lysine.

It belongs to the TrpB family. As to quaternary structure, tetramer of two alpha and two beta chains. The cofactor is pyridoxal 5'-phosphate.

It carries out the reaction (1S,2R)-1-C-(indol-3-yl)glycerol 3-phosphate + L-serine = D-glyceraldehyde 3-phosphate + L-tryptophan + H2O. The protein operates within amino-acid biosynthesis; L-tryptophan biosynthesis; L-tryptophan from chorismate: step 5/5. Its function is as follows. The beta subunit is responsible for the synthesis of L-tryptophan from indole and L-serine. The protein is Tryptophan synthase beta chain of Beijerinckia indica subsp. indica (strain ATCC 9039 / DSM 1715 / NCIMB 8712).